Consider the following 88-residue polypeptide: UPF0250 protein SO_1163 (88 aa).

It belongs to the UPF0250 family.

The protein is UPF0250 protein SO_1163 of Shewanella oneidensis (strain ATCC 700550 / JCM 31522 / CIP 106686 / LMG 19005 / NCIMB 14063 / MR-1).